Reading from the N-terminus, the 586-residue chain is MTMPLPNKTTGVTFLHQIQSSELETLTRPPLKISLERPLGEMYVENNRTGIFNYPEGTTYDFAAAAAPVYSSASLSYAASSETFGSSSLTGLHTLNNVPPSPVVFLAKLPQLSPFIHHHGQQVPYYLESEQGTFAVREAAPPTFYRSSSDNRRQSGRERMSSANDKGPPSMESTKETRYCAVCSDYASGYHYGVWSCEGCKAFFKRSIQGHNDYMCPATNQCTIDKNRRKSCQACRLRKCYEVGMMKGGIRKDRRGGRLLKHKRQKEEQEQKNDVDPSEIRTASIWVNPSVKSMKLSPVLSLTAEQLISALMEAEAPIVYSEHDSTKPLSEASMMTLLTNLADRELVHMINWAKRVPGFVDLTLHDQVHLLECAWLEILMVGLIWRSVEHPGKLSFAPNLLLDRNQGRCVEGLVEIFDMLVTTATRFRMMRLRGEEFICLKSIILLNSGVYTFLSSTLESLEDTDLIHIILDKIIDTLVHFMAKSGLSLQQQQRRLAQLLLILSHIRHMSNKGMEHLYSMKCKNVVPLYDLLLEMLDAHRIHTPKDKTTTQEEDSRSPPTTTVNGASPCLQPYYTNTEEVSLQSTV.

The tract at residues 1 to 179 is modulating; that stretch reads MTMPLPNKTT…SMESTKETRY (179 aa). Positions 144–173 are disordered; the sequence is FYRSSSDNRRQSGRERMSSANDKGPPSMES. Residues 149–160 are compositionally biased toward basic and acidic residues; the sequence is SDNRRQSGRERM. 2 consecutive NR C4-type zinc fingers follow at residues 180-200 and 216-240; these read CAVC…CEGC and CPAT…LRKC. The segment at residues 180-245 is a DNA-binding region (nuclear receptor); sequence CAVCSDYASG…RLRKCYEVGM (66 aa). The hinge stretch occupies residues 246–302; the sequence is MKGGIRKDRRGGRLLKHKRQKEEQEQKNDVDPSEIRTASIWVNPSVKSMKLSPVLSL. A compositionally biased stretch (basic residues) spans 252 to 264; it reads KDRRGGRLLKHKR. The interval 252-276 is disordered; sequence KDRRGGRLLKHKRQKEEQEQKNDVD. Residues 265–276 are compositionally biased toward basic and acidic residues; the sequence is QKEEQEQKNDVD. In terms of domain architecture, NR LBD spans 303-539; it reads TAEQLISALM…DLLLEMLDAH (237 aa). The segment covering 543–556 has biased composition (basic and acidic residues); that stretch reads TPKDKTTTQEEDSR. The segment at 543–569 is disordered; sequence TPKDKTTTQEEDSRSPPTTTVNGASPC.

The protein belongs to the nuclear hormone receptor family. NR3 subfamily. In terms of assembly, binds DNA as a homodimer. Can form a heterodimer with ER-beta.

The protein localises to the nucleus. Functionally, the steroid hormones and their receptors are involved in the regulation of eukaryotic gene expression and affect cellular proliferation and differentiation in target tissues. The sequence is that of Estrogen receptor (esr1) from Xenopus laevis (African clawed frog).